We begin with the raw amino-acid sequence, 504 residues long: Maturase K (504 aa).

This sequence belongs to the intron maturase 2 family. MatK subfamily.

The protein localises to the plastid. It is found in the chloroplast. Functionally, usually encoded in the trnK tRNA gene intron. Probably assists in splicing its own and other chloroplast group II introns. The chain is Maturase K from Quercus rubra (Northern red oak).